A 101-amino-acid chain; its full sequence is NADH-quinone oxidoreductase subunit K (101 aa).

Transmembrane regions (helical) follow at residues 4 to 24 (LEHY…GIFL), 30 to 50 (IVIL…LVAF), and 65 to 85 (FVLT…VTFF).

The protein belongs to the complex I subunit 4L family. As to quaternary structure, NDH-1 is composed of 14 different subunits. Subunits NuoA, H, J, K, L, M, N constitute the membrane sector of the complex.

The protein resides in the cell inner membrane. It carries out the reaction a quinone + NADH + 5 H(+)(in) = a quinol + NAD(+) + 4 H(+)(out). NDH-1 shuttles electrons from NADH, via FMN and iron-sulfur (Fe-S) centers, to quinones in the respiratory chain. The immediate electron acceptor for the enzyme in this species is believed to be ubiquinone. Couples the redox reaction to proton translocation (for every two electrons transferred, four hydrogen ions are translocated across the cytoplasmic membrane), and thus conserves the redox energy in a proton gradient. This is NADH-quinone oxidoreductase subunit K from Cereibacter sphaeroides (strain ATCC 17029 / ATH 2.4.9) (Rhodobacter sphaeroides).